The sequence spans 1048 residues: 3-hydroxy-3-methylglutaryl-coenzyme A reductase (1048 aa).

The Cytoplasmic portion of the chain corresponds to 1-32 (MDPVVKKPSPGGVQHRVTKGLRAIVGHACRHP). A helical transmembrane segment spans residues 33 to 53 (IHTLLVTALTAATTHLHVLEG). The Lumenal portion of the chain corresponds to 54–220 (TYQAAHRGLA…FLHRVKHAET (167 aa)). The chain crosses the membrane as a helical span at residues 221–241 (VDLVIIGLSYLAMNMTVVSLF). Residues 222-403 (DLVIIGLSYL…FTFYATILCV (182 aa)) enclose the SSD domain. The Cytoplasmic portion of the chain corresponds to 242-250 (RVMRQLGSR). A helical transmembrane segment spans residues 251–271 (FWLATSVLLSGAFAFVLGLGI). The Lumenal segment spans residues 272–276 (TTTCD). Residues 277 to 297 (VPVDMLLLFEGIPYLVLTVGF) traverse the membrane as a helical segment. Residues 298-348 (EKPIQLTRAVLCVSEELRGGWQRPVPNGASSDDSRQSQLIPNIIQLAVDRE) are Cytoplasmic-facing. Residues 349–369 (GWYIVRSYLLEIGALALGAVL) form a helical membrane-spanning segment. At 370 to 377 (RPNDSLGH) the chain is on the lumenal side. The N-linked (GlcNAc...) asparagine glycan is linked to N372. A helical transmembrane segment spans residues 378 to 398 (FCFLAAWTLLIDAILLFTFYA). Residues 399–439 (TILCVKLEITRIRSPGGLGQVNAKHPSGIFGHKVKSTNITW) are Cytoplasmic-facing. The helical transmembrane segment at 440-460 (WKLLTVGGFVLCHFLQLSPFF) threads the bilayer. The Lumenal segment spans residues 461–542 (YRVMGEYMAN…LDGLESPLGR (82 aa)). N-linked (GlcNAc...) asparagine glycans are attached at residues N470 and N520. Residues 543 to 563 (LCLMGALVVSLVLNNHLIHAA) form a helical membrane-spanning segment. The Cytoplasmic segment spans residues 564-1048 (RWHAWPQARE…NRSAGATVKK (485 aa)). E729 acts as the Charge relay system in catalysis. Position 735 to 741 (735 to 741 (SASRGCK)) interacts with CoA. Residues 796-798 (SRF) and 823-831 (DAMGMNMIS) contribute to the NADP(+) site. Residue K863 is the Charge relay system of the active site. 892 to 894 (VLK) contributes to the CoA binding site. D939 serves as the catalytic Charge relay system. Position 1034–1035 (1034–1035 (AH)) interacts with CoA. Residue H1035 is the Proton donor of the active site. 1039–1040 (NR) provides a ligand contact to NADP(+).

Belongs to the HMG-CoA reductase family.

Its subcellular location is the endoplasmic reticulum membrane. It carries out the reaction (R)-mevalonate + 2 NADP(+) + CoA = (3S)-3-hydroxy-3-methylglutaryl-CoA + 2 NADPH + 2 H(+). It functions in the pathway metabolic intermediate biosynthesis; (R)-mevalonate biosynthesis; (R)-mevalonate from acetyl-CoA: step 3/3. In terms of biological role, HMG-CoA reductase; part of the first module of ergosterol biosynthesis pathway that includes the early steps of the pathway, conserved across all eukaryotes, and which results in the formation of mevalonate from acetyl-coenzyme A (acetyl-CoA). In this module, the cytosolic acetyl-CoA acetyltransferase catalyzes the formation of acetoacetyl-CoA. The hydroxymethylglutaryl-CoA synthase then condenses acetyl-CoA with acetoacetyl-CoA to form HMG-CoA. The rate-limiting step of the early module is the reduction to mevalonate by the 3-hydroxy-3-methylglutaryl-coenzyme A (HMG-CoA) reductase. The polypeptide is 3-hydroxy-3-methylglutaryl-coenzyme A reductase (Aspergillus terreus (strain NIH 2624 / FGSC A1156)).